The sequence spans 337 residues: Phenylalanine--tRNA ligase alpha subunit (337 aa).

Glu-258 provides a ligand contact to Mg(2+).

Belongs to the class-II aminoacyl-tRNA synthetase family. Phe-tRNA synthetase alpha subunit type 1 subfamily. As to quaternary structure, tetramer of two alpha and two beta subunits. Mg(2+) is required as a cofactor.

It is found in the cytoplasm. It catalyses the reaction tRNA(Phe) + L-phenylalanine + ATP = L-phenylalanyl-tRNA(Phe) + AMP + diphosphate + H(+). The sequence is that of Phenylalanine--tRNA ligase alpha subunit from Burkholderia vietnamiensis (strain G4 / LMG 22486) (Burkholderia cepacia (strain R1808)).